The primary structure comprises 181 residues: Probable toxin TacT (181 aa).

This sequence belongs to the acetyltransferase family. Forms a complex with cognate antitoxin TacA.

In terms of biological role, probable toxin component of a type II toxin-antitoxin (TA) system. Might acetylate tRNA and inhibit translation. Should be neutralized by cognate antitoxin TacA (y4aR). This is Probable toxin TacT from Sinorhizobium fredii (strain NBRC 101917 / NGR234).